The primary structure comprises 425 residues: Serine--tRNA ligase 1 (425 aa).

Residue 230–232 (TSE) coordinates L-serine. Residues 261–263 (RRE) and V277 each bind ATP. Residue E284 coordinates L-serine. ATP is bound at residue 348-351 (ELTS). An L-serine-binding site is contributed by T382.

The protein belongs to the class-II aminoacyl-tRNA synthetase family. Type-1 seryl-tRNA synthetase subfamily. As to quaternary structure, homodimer. The tRNA molecule binds across the dimer.

Its subcellular location is the cytoplasm. The enzyme catalyses tRNA(Ser) + L-serine + ATP = L-seryl-tRNA(Ser) + AMP + diphosphate + H(+). The catalysed reaction is tRNA(Sec) + L-serine + ATP = L-seryl-tRNA(Sec) + AMP + diphosphate + H(+). The protein operates within aminoacyl-tRNA biosynthesis; selenocysteinyl-tRNA(Sec) biosynthesis; L-seryl-tRNA(Sec) from L-serine and tRNA(Sec): step 1/1. Catalyzes the attachment of serine to tRNA(Ser). Is also able to aminoacylate tRNA(Sec) with serine, to form the misacylated tRNA L-seryl-tRNA(Sec), which will be further converted into selenocysteinyl-tRNA(Sec). This is Serine--tRNA ligase 1 from Streptomyces avermitilis (strain ATCC 31267 / DSM 46492 / JCM 5070 / NBRC 14893 / NCIMB 12804 / NRRL 8165 / MA-4680).